A 145-amino-acid chain; its full sequence is Large ribosomal subunit protein uL15 (145 aa).

Basic residues-rich tracts occupy residues 1–13 and 19–29; these read MVRE…RGGH and KAGRGKGKKGG. Positions 1–33 are disordered; that stretch reads MVRERTKKLRGGHYGRGMKAGRGKGKKGGRGNA.

This sequence belongs to the universal ribosomal protein uL15 family. Part of the 50S ribosomal subunit.

Binds to the 23S rRNA. The sequence is that of Large ribosomal subunit protein uL15 from Thermoplasma volcanium (strain ATCC 51530 / DSM 4299 / JCM 9571 / NBRC 15438 / GSS1).